Consider the following 430-residue polypeptide: Glutamate-1-semialdehyde 2,1-aminomutase (430 aa).

At lysine 265 the chain carries N6-(pyridoxal phosphate)lysine.

Belongs to the class-III pyridoxal-phosphate-dependent aminotransferase family. HemL subfamily. As to quaternary structure, homodimer. Requires pyridoxal 5'-phosphate as cofactor.

The protein resides in the cytoplasm. The enzyme catalyses (S)-4-amino-5-oxopentanoate = 5-aminolevulinate. It participates in porphyrin-containing compound metabolism; protoporphyrin-IX biosynthesis; 5-aminolevulinate from L-glutamyl-tRNA(Glu): step 2/2. This Helicobacter pylori (strain HPAG1) protein is Glutamate-1-semialdehyde 2,1-aminomutase.